A 280-amino-acid polypeptide reads, in one-letter code: Ribosomal RNA small subunit methyltransferase A (280 aa).

6 residues coordinate S-adenosyl-L-methionine: His15, Leu17, Gly42, Glu64, Asp89, and Asn109.

It belongs to the class I-like SAM-binding methyltransferase superfamily. rRNA adenine N(6)-methyltransferase family. RsmA subfamily.

Its subcellular location is the cytoplasm. The enzyme catalyses adenosine(1518)/adenosine(1519) in 16S rRNA + 4 S-adenosyl-L-methionine = N(6)-dimethyladenosine(1518)/N(6)-dimethyladenosine(1519) in 16S rRNA + 4 S-adenosyl-L-homocysteine + 4 H(+). Its function is as follows. Specifically dimethylates two adjacent adenosines (A1518 and A1519) in the loop of a conserved hairpin near the 3'-end of 16S rRNA in the 30S particle. May play a critical role in biogenesis of 30S subunits. This Prochlorococcus marinus (strain MIT 9303) protein is Ribosomal RNA small subunit methyltransferase A.